Here is a 176-residue protein sequence, read N- to C-terminus: Ribosome maturation factor RimM (176 aa).

A PRC barrel domain is found at 97–176 (EDEFYWRDLI…QILVDWDPDF (80 aa)).

It belongs to the RimM family. Binds ribosomal protein uS19.

It is found in the cytoplasm. An accessory protein needed during the final step in the assembly of 30S ribosomal subunit, possibly for assembly of the head region. Essential for efficient processing of 16S rRNA. May be needed both before and after RbfA during the maturation of 16S rRNA. It has affinity for free ribosomal 30S subunits but not for 70S ribosomes. The polypeptide is Ribosome maturation factor RimM (Shewanella halifaxensis (strain HAW-EB4)).